A 119-amino-acid chain; its full sequence is Large ribosomal subunit protein uL22 (119 aa).

Belongs to the universal ribosomal protein uL22 family. Part of the 50S ribosomal subunit.

This protein binds specifically to 23S rRNA; its binding is stimulated by other ribosomal proteins, e.g. L4, L17, and L20. It is important during the early stages of 50S assembly. It makes multiple contacts with different domains of the 23S rRNA in the assembled 50S subunit and ribosome. In terms of biological role, the globular domain of the protein is located near the polypeptide exit tunnel on the outside of the subunit, while an extended beta-hairpin is found that lines the wall of the exit tunnel in the center of the 70S ribosome. In Rickettsia typhi (strain ATCC VR-144 / Wilmington), this protein is Large ribosomal subunit protein uL22.